We begin with the raw amino-acid sequence, 316 residues long: MKRNTRKIAIIGTGLVGSSCAYSIVNQGICEELLLIDINHERAVGEAMDLSHCINFTNTRTKVYAGSYEDCKDMDIVIITAGPAPKPGQSRLDTLGASAKIMESVVGGVMESGFDGIFLLASNPVDIITYQVWKLSGLPRNRVIGTGTSLDSSRLRTILSEMLHVDPRSIHGYSLGEHGDSQMVAWSHVTVGGKPILQILEEKKDQFGEIDLDEIVEKTAKAGWEIYKRKGTTYYGIGNSLAYIASSIFNDDYRVIAVSAILDGEYGEYDLCTGVPAIITRDGIKEIVELNLTEDEESRFAKSNDILRDYMKTIGY.

Residues V16, D37, R42, and Y68 each coordinate NAD(+). Position 91 (R91) interacts with substrate. NAD(+)-binding positions include S104, 121-123 (ASN), and T146. Residue 123–126 (NPVD) coordinates substrate. Residue 151–154 (DSSR) participates in substrate binding. Beta-D-fructose 1,6-bisphosphate is bound by residues R156 and H171. Residue H178 is the Proton acceptor of the active site. A substrate-binding site is contributed by T233.

It belongs to the LDH/MDH superfamily. LDH family. As to quaternary structure, homotetramer.

It localises to the cytoplasm. It carries out the reaction (S)-lactate + NAD(+) = pyruvate + NADH + H(+). It participates in fermentation; pyruvate fermentation to lactate; (S)-lactate from pyruvate: step 1/1. With respect to regulation, allosterically activated by fructose 1,6-bisphosphate (FBP). Functionally, catalyzes the conversion of lactate to pyruvate. The polypeptide is L-lactate dehydrogenase 3 (Bacillus cereus (strain ATCC 10987 / NRS 248)).